The following is a 348-amino-acid chain: Probable malate dehydrogenase 2, mitochondrial (348 aa).

Residues 1–9 (MNKILTRSF) constitute a mitochondrion transit peptide. 31–37 (GASGQIG) contacts NAD(+). Substrate-binding residues include Arg-112 and Arg-118. Residues Asn-125, Gln-132, and 150–152 (VGN) each bind NAD(+). Residues Asn-152 and Arg-183 each coordinate substrate. His-208 acts as the Proton acceptor in catalysis.

The protein belongs to the LDH/MDH superfamily. MDH type 2 family. Homodimer.

Its subcellular location is the mitochondrion. The enzyme catalyses (S)-malate + NAD(+) = oxaloacetate + NADH + H(+). In terms of biological role, catalyzes the reversible oxidation of malate to oxaloacetate. The sequence is that of Probable malate dehydrogenase 2, mitochondrial (mdhB) from Dictyostelium discoideum (Social amoeba).